Consider the following 368-residue polypeptide: NAD(P)H-quinone oxidoreductase subunit 1, chloroplastic (368 aa).

9 consecutive transmembrane segments (helical) span residues 27-47 (FLWIIFSILILMLGVTIGVLV), 97-117 (WLFNIGPILVLIPVFLSYLVI), 130-150 (IGVFFWIAVSSVVPLGLLMAG), 166-186 (AAQSISYEIPLALSVLSIALL), 204-224 (FLSWNLWRQPIGFIVFFIASL), 249-269 (YSGMKFAFFYLASYLNLLVSS), 270-290 (LFVTILYLGGWHFSIPFFSLF), 305-325 (VISIIIGIVITLVKSYLFLFI), and 348-368 (FLLPIALGNLLLTTSFQLFLL).

Belongs to the complex I subunit 1 family. NDH is composed of at least 16 different subunits, 5 of which are encoded in the nucleus.

It localises to the plastid. Its subcellular location is the chloroplast thylakoid membrane. The enzyme catalyses a plastoquinone + NADH + (n+1) H(+)(in) = a plastoquinol + NAD(+) + n H(+)(out). It catalyses the reaction a plastoquinone + NADPH + (n+1) H(+)(in) = a plastoquinol + NADP(+) + n H(+)(out). NDH shuttles electrons from NAD(P)H:plastoquinone, via FMN and iron-sulfur (Fe-S) centers, to quinones in the photosynthetic chain and possibly in a chloroplast respiratory chain. The immediate electron acceptor for the enzyme in this species is believed to be plastoquinone. Couples the redox reaction to proton translocation, and thus conserves the redox energy in a proton gradient. The sequence is that of NAD(P)H-quinone oxidoreductase subunit 1, chloroplastic from Marchantia polymorpha (Common liverwort).